The following is a 192-amino-acid chain: Iodate reductase subunit IdrB (192 aa).

Residues 1-52 constitute a signal peptide (tat-type signal); sequence MSENIIPVRAVPAHDHEHDGERACMSRRRFLLFGGTSVALLSIASLPGVAQV. Residues 102–173 form the Rieske domain; that stretch reads GADKDIVAFN…LEVQGDDIYA (72 aa). 4 residues coordinate [2Fe-2S] cluster: C114, H116, C135, and H138.

Belongs to the AOX family. The iodate reductase (Idr) complex is composed of a molybdopterin-dependent iodate reductase (IdrA and IdrB subunits) and two associated peroxidases (IdrP1 and IdrP2). Requires [2Fe-2S] cluster as cofactor. Post-translationally, predicted to be exported by the Tat system. The position of the signal peptide cleavage has not been experimentally proven.

The protein localises to the periplasm. Involved in iodate respiration. Probably catalyzes the reduction of iodate (IO(3)(-)) to hypoiodous acid (HIO) and H(2)O(2), using a reduced cytochrome c as the electron donor. This is Iodate reductase subunit IdrB from Pseudomonas sp. (strain SCT).